A 227-amino-acid polypeptide reads, in one-letter code: GRF-interacting factor 1 (227 aa).

Low complexity predominate over residues 124 to 139 (ALSPLQQQQQQQAAAA). Disordered stretches follow at residues 124 to 160 (ALSP…LHGE) and 188 to 227 (GGGG…EEGS). Basic and acidic residues predominate over residues 217 to 227 (EYLKGTEEEGS).

The protein belongs to the SS18 family. Interacts with GRF4. In terms of tissue distribution, highly expressed in internodes, nodes, developing spikelets and developing anthers. Expressed at low levels in roots and mature glumes.

It is found in the nucleus. The protein resides in the cytoplasm. Transcription coactivator that plays a role in the regulation of meristematic function in leaves, stems and inflorescences. May regulate leaf size, length of stem internodes, and seed size by promoting cell expansion. Transcription coactivator that plays a role in the regulation of grain size. Component of a network formed by the microRNA396 (miRNA396), the GRFs and their interacting factors (GIFs) acting in the regulation of meristem function, at least partially through the control of cell proliferation. Component of the miRNA396c-GRF4-GIF1 regulatory module that plays an important role in grain size determination. The sequence is that of GRF-interacting factor 1 from Oryza sativa subsp. japonica (Rice).